The chain runs to 544 residues: Epidermal growth factor-like protein 6 (544 aa).

The first 30 residues, 1–30 (MAITGGMQSSDMVLLLWITVICACCSFVDS), serve as a signal peptide directing secretion. One can recognise an EGF-like 1 domain in the interval 63 to 98 (RKGQCEAVCEQGCKHGECVGPNKCKCFPGFTGKNCN). 6 disulfides stabilise this stretch: Cys67–Cys80, Cys71–Cys86, Cys88–Cys97, Cys104–Cys115, Cys111–Cys124, and Cys126–Cys138. The EGF-like 2; calcium-binding domain maps to 100–139 (DLNECGLKPRPCEHRCMNTHGSYKCYCLNGYMLMPDGSCS). The EGF-like 3 domain occupies 144 to 178 (CAMANCQYGCEQVKGDIRCLCPSGGLQLGPDGRTC). The 39-residue stretch at 180-218 (DIDECAVGKASCPINRRCVNTFGSYYCKCQIGYELKYVN) folds into the EGF-like 4; calcium-binding domain. 5 cysteine pairs are disulfide-bonded: Cys184–Cys197, Cys191–Cys206, Cys229–Cys242, Cys236–Cys251, and Cys253–Cys264. Positions 225–265 (DINECLLNTHKCSINADCLNTQGSFKCRCKHGFKGNGQECS) constitute an EGF-like 5; calcium-binding domain. The interval 332–357 (GNDNDEEEGEIEEEEEEELDEEDEEN) is disordered. Residues 333–367 (NDNDEEEGEIEEEEEEELDEEDEENVIEEEKLLRG) adopt a coiled-coil conformation. A compositionally biased stretch (acidic residues) spans 334 to 357 (DNDEEEGEIEEEEEEELDEEDEEN). An MAM domain is found at 399 to 543 (VDCRFDQGTC…VFLSSGPCSD (145 aa)).

Belongs to the nephronectin family.

It localises to the secreted. The protein localises to the extracellular space. It is found in the extracellular matrix. Its subcellular location is the basement membrane. In terms of biological role, may play a role in organ morphogenesis. Promotes matrix assembly. This Xenopus laevis (African clawed frog) protein is Epidermal growth factor-like protein 6 (egfl6).